The following is a 575-amino-acid chain: Sulfite reductase [NADPH] hemoprotein beta-component (575 aa).

4 residues coordinate [4Fe-4S] cluster: cysteine 440, cysteine 446, cysteine 485, and cysteine 489. Cysteine 489 is a binding site for siroheme.

It belongs to the nitrite and sulfite reductase 4Fe-4S domain family. In terms of assembly, alpha(8)-beta(8). The alpha component is a flavoprotein, the beta component is a hemoprotein. The cofactor is siroheme. [4Fe-4S] cluster serves as cofactor.

It catalyses the reaction hydrogen sulfide + 3 NADP(+) + 3 H2O = sulfite + 3 NADPH + 4 H(+). Its pathway is sulfur metabolism; hydrogen sulfide biosynthesis; hydrogen sulfide from sulfite (NADPH route): step 1/1. Functionally, component of the sulfite reductase complex that catalyzes the 6-electron reduction of sulfite to sulfide. This is one of several activities required for the biosynthesis of L-cysteine from sulfate. This is Sulfite reductase [NADPH] hemoprotein beta-component from Chromohalobacter salexigens (strain ATCC BAA-138 / DSM 3043 / CIP 106854 / NCIMB 13768 / 1H11).